Consider the following 255-residue polypeptide: Taurine import ATP-binding protein TauB (255 aa).

In terms of domain architecture, ABC transporter spans 2–229 (LQISHLYADY…RFVAGESSRS (228 aa)). Position 34-41 (34-41 (GPSGCGKT)) interacts with ATP.

It belongs to the ABC transporter superfamily. Taurine importer (TC 3.A.1.17.1) family. The complex is composed of two ATP-binding proteins (TauB), two transmembrane proteins (TauC) and a solute-binding protein (TauA).

The protein resides in the cell inner membrane. It catalyses the reaction taurine(out) + ATP + H2O = taurine(in) + ADP + phosphate + H(+). Functionally, part of the ABC transporter complex TauABC involved in taurine import. Responsible for energy coupling to the transport system. This Shigella flexneri protein is Taurine import ATP-binding protein TauB.